The following is a 535-amino-acid chain: UDP-glucuronosyltransferase 1A1 (535 aa).

An N-terminal signal peptide occupies residues 1–29 (MSVVCRSSCSLLLLPCLLLCVLGPSASHA). Residues Asn89, Asn297, and Asn435 are each glycosylated (N-linked (GlcNAc...) asparagine). The chain crosses the membrane as a helical span at residues 493–509 (VIGFLLAIVLTVVFIVY).

Belongs to the UDP-glycosyltransferase family. In terms of assembly, homodimers. Homooligomer. Interacts with UGT1A3, UGT1A4, UGT1A6, UGT1A7, UGT1A8, UGT1A9 and UGT1A10 to form heterodimers.

The protein localises to the endoplasmic reticulum membrane. The enzyme catalyses glucuronate acceptor + UDP-alpha-D-glucuronate = acceptor beta-D-glucuronoside + UDP + H(+). It carries out the reaction 17beta-estradiol + UDP-alpha-D-glucuronate = 17beta-estradiol 3-O-(beta-D-glucuronate) + UDP + H(+). It catalyses the reaction 2-hydroxyestrone + UDP-alpha-D-glucuronate = 2-hydroxyestrone 3-O-(beta-D-glucuronate) + UDP + H(+). The catalysed reaction is 2-hydroxy-17beta-estradiol + UDP-alpha-D-glucuronate = 2-hydroxy-17beta-estradiol 3-O-(beta-D-glucuronate) + UDP + H(+). The enzyme catalyses 2-methoxy-17beta-estradiol + UDP-alpha-D-glucuronate = 2-methoxy-17beta-estradiol 3-O-(beta-D-glucuronate) + UDP + H(+). It carries out the reaction 17alpha-estradiol + UDP-alpha-D-glucuronate = 17alpha-estradiol 3-O-(beta-D-glucuronate) + UDP + H(+). It catalyses the reaction 16beta,17beta-estriol + UDP-alpha-D-glucuronate = 16beta,17beta-estriol 16-O-(beta-D-glucuronate) + UDP + H(+). The catalysed reaction is losartan + UDP-alpha-D-glucuronate = losartan-2-N-beta-D-glucuronide + UDP. The enzyme catalyses prunetin + UDP-alpha-D-glucuronate = prunetin-4'-O-beta-D-glucuronide + UDP. It carries out the reaction SN-38 + UDP-alpha-D-glucuronate = SN-38 O-beta-D-glucuronide + UDP + H(+). It catalyses the reaction (4Z,15Z)-bilirubin IXalpha + UDP-alpha-D-glucuronate = (4Z,15Z)-bilirubin IXalpha C12-beta-D-glucuronoside + UDP. The catalysed reaction is (4Z,15Z)-bilirubin IXalpha + UDP-alpha-D-glucuronate = (4Z,15Z)-bilirubin IXalpha C8-beta-D-glucuronoside + UDP. The enzyme catalyses (4Z,15Z)-bilirubin IXalpha C8-beta-D-glucuronoside + UDP-alpha-D-glucuronate = (4Z,15Z)-bilirubin IXalpha C8,C12-beta-D-bisglucuronoside + UDP. It carries out the reaction (4Z,15Z)-bilirubin IXalpha C12-beta-D-glucuronoside + UDP-alpha-D-glucuronate = (4Z,15Z)-bilirubin IXalpha C8,C12-beta-D-bisglucuronoside + UDP. It catalyses the reaction 8-iso-prostaglandin F2alpha + UDP-alpha-D-glucuronate = 8-iso-prostaglandin F2alpha-glucuronide + UDP + H(+). The catalysed reaction is (5Z,8Z,11Z,14Z)-eicosatetraenoate + UDP-alpha-D-glucuronate = O-[(5Z),(8Z),(11Z),(14Z)-eicosatetraenoyl]-beta-D-glucuronate + UDP. The enzyme catalyses 15-hydroxy-(5Z,8Z,11Z,13E)-eicosatetraenoate + UDP-alpha-D-glucuronate = 15-O-(beta-D-glucuronosyl)-(5Z,8Z,11Z,14Z)-eicosatetraenoate + UDP + H(+). It carries out the reaction 20-hydroxy-(5Z,8Z,11Z,14Z)-eicosatetraenoate + UDP-alpha-D-glucuronate = 20-O-(beta-D-glucuronosyl)-(5Z,8Z,11Z,14Z)-eicosatetraenoate + UDP + H(+). It catalyses the reaction prostaglandin B1 + UDP-alpha-D-glucuronate = 15-O-(beta-D-glucuronosyl)-prostaglandin B1 + UDP + H(+). The catalysed reaction is (E)-ferulate + UDP-alpha-D-glucuronate = (E)-4-O-(beta-D-glucuronosyl)-ferulate + UDP + H(+). The enzyme catalyses (E)-ferulate + UDP-alpha-D-glucuronate = (E)-ferulic acid beta-D-glucuronate ester + UDP. UDP-glucuronosyltransferase (UGT) that catalyzes phase II biotransformation reactions in which lipophilic substrates are conjugated with glucuronic acid to increase the metabolite's water solubility, thereby facilitating excretion into either the urine or bile. Essential for the elimination and detoxification of drugs, xenobiotics and endogenous compounds. Catalyzes the glucuronidation of endogenous estrogen hormones such as estradiol, estrone and estriol. Involved in the glucuronidation of bilirubin, a degradation product occurring in the normal catabolic pathway that breaks down heme in vertebrates. Involved in the glucuronidation of arachidonic acid (AA) and AA-derived eicosanoids including 15-HETE, 20-HETE, PGB1 and F2-isoprostane (8-iso-PGF2alpha). Involved in the glucuronidation of the phytochemical ferulic acid at the phenolic or the carboxylic acid group. Also catalyzes the glucuronidation the isoflavones genistein, daidzein, glycitein, formononetin, biochanin A and prunetin, which are phytoestrogens with anticancer and cardiovascular properties. Involved in the glucuronidation of the AGTR1 angiotensin receptor antagonist losartan, a drug which can inhibit the effect of angiotensin II. Involved in the biotransformation of 7-ethyl-10-hydroxycamptothecin (SN-38), the pharmacologically active metabolite of the anticancer drug irinotecan. This is UDP-glucuronosyltransferase 1A1 from Rattus norvegicus (Rat).